The sequence spans 418 residues: UPF0261 protein BMEII0128 (418 aa).

This sequence belongs to the UPF0261 family.

The chain is UPF0261 protein BMEII0128 from Brucella melitensis biotype 1 (strain ATCC 23456 / CCUG 17765 / NCTC 10094 / 16M).